Reading from the N-terminus, the 491-residue chain is MNTSLRRVAVAIMVLIVLLLANATVTQVFAADGLRADPRNQRVLLDEYSRQRGQITAGGQLLAYSVSTDGRFRYLRVYPNPQAYAPVTGFYSLGYSSTGLERAEDAVLNGSDERLFGRRLADFFTGRDPRGGNVDTTIKPQVQQAAWDAMQNGCDGPCRGSVVALEPSTGKILAMVSAPSYDPNLLATHDLAAQADAWEKLRDDPQSPLLNRAISETYPPGSTFKVITTAAALQAGARPQTQLTSAPRTPLPDSTATLENFGGAPCGPGPTVSLQEAFAKSCNTAFVELGLSTGTDKLKAMAQAFGLDTPPPAIPLQVAESTTGPIVDAAALGMSSIGQRDVALTPLQNAQVAATIANDGIAMRPYLVESLKGPDLATISTTTPEQERRAVSPQVAATLTDLMVAAEQVTQQKGAIAGVQIASKTGTAEHGTDPRNTPPHAWYIAFAPAQDPKVAVAVLVEDGGDRLSATGGALAAPIGRATIAAALREGS.

Residues 1–8 (MNTSLRRV) are Cytoplasmic-facing. The chain crosses the membrane as a helical; Signal-anchor for type II membrane protein span at residues 9 to 29 (AVAIMVLIVLLLANATVTQVF). At 30-491 (AADGLRADPR…TIAAALREGS (462 aa)) the chain is on the periplasmic side. Positions 160-484 (GSVVALEPST…AAPIGRATIA (325 aa)) are transpeptidase. Ser222 functions as the Acyl-ester intermediate in the catalytic mechanism.

This sequence belongs to the transpeptidase family.

Its subcellular location is the cell inner membrane. It catalyses the reaction Preferential cleavage: (Ac)2-L-Lys-D-Ala-|-D-Ala. Also transpeptidation of peptidyl-alanyl moieties that are N-acyl substituents of D-alanine.. Its pathway is cell wall biogenesis; peptidoglycan biosynthesis. Transpeptidase that catalyzes cross-linking of the peptidoglycan cell wall. Required for the regulation of cell length. This is Peptidoglycan D,D-transpeptidase PbpA (pbpA) from Mycolicibacterium smegmatis (strain ATCC 700084 / mc(2)155) (Mycobacterium smegmatis).